A 600-amino-acid chain; its full sequence is Cationic amino acid transporter 4, vacuolar (600 aa).

Residues Met1–Asp32 lie on the Cytoplasmic side of the membrane. Residues Leu33–Val53 traverse the membrane as a helical segment. Topologically, residues Ala54 to Pro60 are vacuolar. Residues Ala61–Ala81 form a helical membrane-spanning segment. At Glu82 to Ser92 the chain is on the cytoplasmic side. A helical transmembrane segment spans residues Ala93 to Leu115. The Vacuolar segment spans residues Asp116–Pro152. A helical membrane pass occupies residues Gly153 to Leu173. Residues Cys174–Gln184 lie on the Cytoplasmic side of the membrane. A helical membrane pass occupies residues Ala185–Leu205. The Vacuolar portion of the chain corresponds to Ala206–Tyr220. A helical transmembrane segment spans residues Phe221 to Gly241. Residues Phe242–Gly264 are Cytoplasmic-facing. Residues Ile265–Val285 form a helical membrane-spanning segment. At Pro286–Ala308 the chain is on the vacuolar side. A helical transmembrane segment spans residues Ala309–Leu329. Topologically, residues Ala330 to Lys360 are cytoplasmic. Residues Ser361–Leu381 form a helical membrane-spanning segment. Residue Ser382 is a topological domain, vacuolar. The chain crosses the membrane as a helical span at residues Glu383–Leu403. Over Arg404 to Lys462 the chain is Cytoplasmic. Residues Ile463–Ser483 form a helical membrane-spanning segment. Residues Ala484–Arg492 are Vacuolar-facing. A helical transmembrane segment spans residues Phe493 to Ile513. Topologically, residues Asp514–Phe528 are cytoplasmic. Residues Leu529 to Ile549 traverse the membrane as a helical segment. Position 550 (Asn550) is a topological domain, vacuolar. A helical membrane pass occupies residues Ile551–Ile571. Residues Phe572–Ala600 lie on the Cytoplasmic side of the membrane.

It belongs to the amino acid-polyamine-organocation (APC) superfamily. Cationic amino acid transporter (CAT) (TC 2.A.3.3) family. Expressed in roots, stems, flowers, and leaves.

It is found in the vacuole membrane. Its function is as follows. Permease involved in the transport of the cationic amino acids. The protein is Cationic amino acid transporter 4, vacuolar (CAT4) of Arabidopsis thaliana (Mouse-ear cress).